The chain runs to 143 residues: 3-hydroxyacyl-[acyl-carrier-protein] dehydratase FabZ (143 aa).

Residue His49 is part of the active site.

Belongs to the thioester dehydratase family. FabZ subfamily.

The protein resides in the cytoplasm. It carries out the reaction a (3R)-hydroxyacyl-[ACP] = a (2E)-enoyl-[ACP] + H2O. In terms of biological role, involved in unsaturated fatty acids biosynthesis. Catalyzes the dehydration of short chain beta-hydroxyacyl-ACPs and long chain saturated and unsaturated beta-hydroxyacyl-ACPs. The chain is 3-hydroxyacyl-[acyl-carrier-protein] dehydratase FabZ from Ehrlichia chaffeensis (strain ATCC CRL-10679 / Arkansas).